We begin with the raw amino-acid sequence, 426 residues long: Serine--tRNA ligase (426 aa).

An L-serine-binding site is contributed by Thr-233–Glu-235. Arg-264–Glu-266 provides a ligand contact to ATP. Glu-287 contacts L-serine. Residue Glu-351–Ser-354 participates in ATP binding. An L-serine-binding site is contributed by Ser-387.

The protein belongs to the class-II aminoacyl-tRNA synthetase family. Type-1 seryl-tRNA synthetase subfamily. As to quaternary structure, homodimer. The tRNA molecule binds across the dimer.

The protein resides in the cytoplasm. The enzyme catalyses tRNA(Ser) + L-serine + ATP = L-seryl-tRNA(Ser) + AMP + diphosphate + H(+). It catalyses the reaction tRNA(Sec) + L-serine + ATP = L-seryl-tRNA(Sec) + AMP + diphosphate + H(+). The protein operates within aminoacyl-tRNA biosynthesis; selenocysteinyl-tRNA(Sec) biosynthesis; L-seryl-tRNA(Sec) from L-serine and tRNA(Sec): step 1/1. Catalyzes the attachment of serine to tRNA(Ser). Is also able to aminoacylate tRNA(Sec) with serine, to form the misacylated tRNA L-seryl-tRNA(Sec), which will be further converted into selenocysteinyl-tRNA(Sec). The polypeptide is Serine--tRNA ligase (Xylella fastidiosa (strain M12)).